Here is a 381-residue protein sequence, read N- to C-terminus: Transaldolase 2 (381 aa).

The active-site Schiff-base intermediate with substrate is the K141.

Belongs to the transaldolase family. Type 2 subfamily.

Its subcellular location is the cytoplasm. The catalysed reaction is D-sedoheptulose 7-phosphate + D-glyceraldehyde 3-phosphate = D-erythrose 4-phosphate + beta-D-fructose 6-phosphate. Its pathway is carbohydrate degradation; pentose phosphate pathway; D-glyceraldehyde 3-phosphate and beta-D-fructose 6-phosphate from D-ribose 5-phosphate and D-xylulose 5-phosphate (non-oxidative stage): step 2/3. Its function is as follows. Transaldolase is important for the balance of metabolites in the pentose-phosphate pathway. This is Transaldolase 2 (tal2) from Nostoc punctiforme (strain ATCC 29133 / PCC 73102).